The chain runs to 216 residues: Somatotropin (216 aa).

Residues 1–26 form the signal peptide; it reads MAAGPRNSVLLAFALLCLPWPQEVGT. His-45 lines the Zn(2+) pocket. A disulfide bond links Cys-78 and Cys-189. The residue at position 131 (Ser-131) is a Phosphoserine. Position 198 (Glu-198) interacts with Zn(2+). A disulfide bond links Cys-206 and Cys-214.

This sequence belongs to the somatotropin/prolactin family.

The protein resides in the secreted. Its function is as follows. Plays an important role in growth control. Its major role in stimulating body growth is to stimulate the liver and other tissues to secrete IGF1. It stimulates both the differentiation and proliferation of myoblasts. It also stimulates amino acid uptake and protein synthesis in muscle and other tissues. This Felis catus (Cat) protein is Somatotropin (GH1).